Here is a 241-residue protein sequence, read N- to C-terminus: ATP synthase subunit a (241 aa).

The next 7 membrane-spanning stretches (helical) occupy residues 27 to 47, 52 to 72, 87 to 107, 112 to 132, 142 to 162, 175 to 195, and 198 to 218; these read NCSL…CWAL, VVPG…ANTL, VMTT…PFGF, HLSV…VIGF, IFLP…IKLF, LAAN…FVLK, and LVLA…EIFV.

This sequence belongs to the ATPase A chain family. F-type ATPases have 2 components, CF(1) - the catalytic core - and CF(0) - the membrane proton channel. CF(1) has five subunits: alpha(3), beta(3), gamma(1), delta(1), epsilon(1). CF(0) has three main subunits: a(1), b(2) and c(9-12). The alpha and beta chains form an alternating ring which encloses part of the gamma chain. CF(1) is attached to CF(0) by a central stalk formed by the gamma and epsilon chains, while a peripheral stalk is formed by the delta and b chains.

The protein localises to the cell inner membrane. Functionally, key component of the proton channel; it plays a direct role in the translocation of protons across the membrane. This is ATP synthase subunit a from Anaplasma marginale (strain St. Maries).